We begin with the raw amino-acid sequence, 301 residues long: Dihydroorotate dehydrogenase B (NAD(+)), catalytic subunit (301 aa).

FMN contacts are provided by residues Ser21 and 45–46 (KS). Substrate-binding positions include Lys45, 69 to 73 (NAVGL), and Asn125. Asn125 contributes to the FMN binding site. Cys128 serves as the catalytic Nucleophile. Residues Lys163 and Ile187 each contribute to the FMN site. A substrate-binding site is contributed by 188–189 (NT). Residues Gly213, 239–240 (GG), and 261–262 (GT) each bind FMN.

Belongs to the dihydroorotate dehydrogenase family. Type 1 subfamily. In terms of assembly, heterotetramer of 2 PyrK and 2 PyrD type B subunits. It depends on FMN as a cofactor.

It localises to the cytoplasm. The catalysed reaction is (S)-dihydroorotate + NAD(+) = orotate + NADH + H(+). It participates in pyrimidine metabolism; UMP biosynthesis via de novo pathway; orotate from (S)-dihydroorotate (NAD(+) route): step 1/1. In terms of biological role, catalyzes the conversion of dihydroorotate to orotate with NAD(+) as electron acceptor. This is Dihydroorotate dehydrogenase B (NAD(+)), catalytic subunit (pyrD) from Thermoplasma volcanium (strain ATCC 51530 / DSM 4299 / JCM 9571 / NBRC 15438 / GSS1).